The primary structure comprises 569 residues: MLO-like protein 10 (569 aa).

The Extracellular portion of the chain corresponds to 1–41 (MATRCFWCWTTLLFCSQLLTGFARASSAGGAKEKGLSQTPT). A helical membrane pass occupies residues 42–62 (WAVALVCTFFILVSVLLEKAL). Residues 63–85 (HRVATWLWEKHKNSLLEALEKIK) lie on the Cytoplasmic side of the membrane. The chain crosses the membrane as a helical span at residues 86–106 (AELMILGFISLLLTFGEQYIL). Over 107-163 (KICIPEKAAASMLPCPAPSTHDQDKTHRRRLAAATTSSRCDEGHEPLIPATGLHQLH) the chain is Extracellular. The chain crosses the membrane as a helical span at residues 164 to 184 (ILLFFMAAFHILYSFITMMLG). At 185-286 (RLKIRGWKKW…IKRSLEDDFK (102 aa)) the chain is on the cytoplasmic side. Residues 287–307 (VVVGISPLLWASFVIFLLLNV) traverse the membrane as a helical segment. Asparagine 308 is a topological domain (extracellular). Residues 309–329 (GWEALFWASILPVLIILAVST) form a helical membrane-spanning segment. Residues 330 to 372 (KLQAILTRMALGITERHAVVQGIPLVHGSDKYFWFNRPQLLLH) lie on the Cytoplasmic side of the membrane. A helical membrane pass occupies residues 373 to 393 (LLHFALFQNAFQLTYFFWVWY). Topologically, residues 394–413 (SFGLKSCFHTDFKLVIVKLS) are extracellular. A helical membrane pass occupies residues 414–434 (LGVGALILCSYITLPLYALVT). Residues 435–569 (QMGSNMKKAV…VKNVPANDID (135 aa)) lie on the Cytoplasmic side of the membrane. Residues 447 to 468 (EQMAKALKKWHMTVKKKKGKAR) are calmodulin-binding.

It belongs to the MLO family.

The protein localises to the membrane. May be involved in modulation of pathogen defense and leaf cell death. Activity seems to be regulated by Ca(2+)-dependent calmodulin binding and seems not to require heterotrimeric G proteins. This Arabidopsis thaliana (Mouse-ear cress) protein is MLO-like protein 10 (MLO10).